A 115-amino-acid chain; its full sequence is Ribonuclease P protein component 4 (115 aa).

Zn(2+) contacts are provided by cysteine 66, cysteine 69, cysteine 96, and cysteine 99.

This sequence belongs to the eukaryotic/archaeal RNase P protein component 4 family. As to quaternary structure, consists of a catalytic RNA component and at least 4-5 protein subunits. Zn(2+) is required as a cofactor.

Its subcellular location is the cytoplasm. The enzyme catalyses Endonucleolytic cleavage of RNA, removing 5'-extranucleotides from tRNA precursor.. In terms of biological role, part of ribonuclease P, a protein complex that generates mature tRNA molecules by cleaving their 5'-ends. The sequence is that of Ribonuclease P protein component 4 from Hyperthermus butylicus (strain DSM 5456 / JCM 9403 / PLM1-5).